The sequence spans 92 residues: MKIPKERRTYCPNCRKHTVHEVLESKRRKASELKWGQRQFRRVTAGYRGYPRPLPSGNKPVKKLDLRLKCKECGKSHIKKKSFRAGRVEYVA.

Residues C11, C14, C70, and C73 each coordinate Zn(2+). Residues 11–73 (CPNCRKHTVH…LDLRLKCKEC (63 aa)) form a C4-type zinc finger.

It belongs to the eukaryotic ribosomal protein eL42 family. In terms of assembly, part of the 50S ribosomal subunit. Zn(2+) is required as a cofactor.

Its function is as follows. Binds to the 23S rRNA. In Methanothermobacter thermautotrophicus (strain ATCC 29096 / DSM 1053 / JCM 10044 / NBRC 100330 / Delta H) (Methanobacterium thermoautotrophicum), this protein is Large ribosomal subunit protein eL42.